Here is a 252-residue protein sequence, read N- to C-terminus: tRNA1(Val) (adenine(37)-N6)-methyltransferase (252 aa).

The protein belongs to the methyltransferase superfamily. tRNA (adenine-N(6)-)-methyltransferase family.

Its subcellular location is the cytoplasm. It catalyses the reaction adenosine(37) in tRNA1(Val) + S-adenosyl-L-methionine = N(6)-methyladenosine(37) in tRNA1(Val) + S-adenosyl-L-homocysteine + H(+). Its function is as follows. Specifically methylates the adenine in position 37 of tRNA(1)(Val) (anticodon cmo5UAC). This is tRNA1(Val) (adenine(37)-N6)-methyltransferase from Proteus mirabilis (strain HI4320).